The following is an 892-amino-acid chain: Zinc finger protein 473 homolog (892 aa).

Residues 23–101 (ETLKDLAMDF…TKSSPLQSGF (79 aa)) enclose the KRAB domain. Composition is skewed to polar residues over residues 66–76 (DTSQPSLTSQP) and 84–97 (ATSTEVPETKSSPL). 2 disordered regions span residues 66-97 (DTSQPSLTSQPDVREELEATSTEVPETKSSPL) and 134-203 (GDPE…DSVQ). Composition is skewed to basic and acidic residues over residues 138 to 156 (SLPRPDISDKESPADHQSP) and 190 to 203 (KESRSDLSQEDSVQ). 2 C2H2-type zinc fingers span residues 209–231 (YKCSECGESFSQSHHLIQHWVLH) and 265–287 (YTCQECGKRFSQNVYLQWHQKIH). Over residues 297-308 (SDSNLEGLSRSP) the composition is skewed to polar residues. The disordered stretch occupies residues 297–370 (SDSNLEGLSR…HPKPLRHQKT (74 aa)). Basic and acidic residues-rich tracts occupy residues 313–323 (GKQRLSKDTDS) and 332–353 (QDQEKPPTGESRDQENLHESQP). 8 consecutive C2H2-type zinc fingers follow at residues 377 to 399 (FRCKKCGETFSGAFHLAKHQRAH), 404 to 426 (YKCASCPAVFNLSKHCFQHRKSH), 432 to 454 (CECQGCRKSFNWRSSLIKHQAIH), 460 to 482 (YKCDECGKAFNHSSTLKIHQRIH), 488 to 510 (HKCSECGKAFCRRTDLTEHQRVH), 516 to 538 (HQCPVCARTFNRPSHLVRHRLRH), 544 to 566 (FGCAKCKETFIYKEQLERHNKIH), and 572 to 594 (YECKQCGEHFICRSTLNCHLSIH). Residue lysine 476 forms a Glycyl lysine isopeptide (Lys-Gly) (interchain with G-Cter in SUMO2) linkage. A Glycyl lysine isopeptide (Lys-Gly) (interchain with G-Cter in SUMO2) cross-link involves residue lysine 602. The C2H2-type 11; degenerate zinc-finger motif lies at 697–719 (FKCDIYNRAFKQRAHLSKHQLIH). C2H2-type zinc fingers lie at residues 725–747 (FKCNECDRAFKQSNYLIQHQKTH), 753–775 (FECSECGKTFHQRSCLSKHQKIH), 781–803 (FKCGDCGKAFISGAQLIRHQRIH), 809–831 (YVCQECGKTFSQSSCLTLHLRIH), 837–859 (YTCGTCGKAFAQRANQRKHERIH), and 865–887 (YACGLCGKAFGLRTHLQQHQRIH).

It belongs to the krueppel C2H2-type zinc-finger protein family. As to quaternary structure, interacts with the SLBP/pre-mRNA complex but not with SLBP alone. Interacts with LSM11 in a U7 snRNP-dependent manner.

It is found in the nucleus. Functionally, involved in histone 3'-end pre-mRNA processing by associating with U7 snRNP and interacting with SLBP/pre-mRNA complex. Increases histone 3'-end pre-mRNA processing but has no effect on U7 snRNP levels, when overexpressed. Required for cell cycle progression from G1 to S phases. The polypeptide is Zinc finger protein 473 homolog (Znf473) (Mus musculus (Mouse)).